The sequence spans 616 residues: DNA mismatch repair protein MutL (616 aa).

It belongs to the DNA mismatch repair MutL/HexB family.

In terms of biological role, this protein is involved in the repair of mismatches in DNA. It is required for dam-dependent methyl-directed DNA mismatch repair. May act as a 'molecular matchmaker', a protein that promotes the formation of a stable complex between two or more DNA-binding proteins in an ATP-dependent manner without itself being part of a final effector complex. This Syntrophus aciditrophicus (strain SB) protein is DNA mismatch repair protein MutL.